Consider the following 595-residue polypeptide: P2X purinoceptor 7 (595 aa).

Residues 1-22 are Cytoplasmic-facing; the sequence is MPACCSWNDVLQYETNKVTRIQ. The S-palmitoyl cysteine moiety is linked to residue Cys4. Residues 23–46 traverse the membrane as a helical segment; that stretch reads STNYGTVKWVLHMIVFSYISFALV. At 47 to 328 the chain is on the extracellular side; the sequence is SDKLYQRKEP…ILVFGTGGKF (282 aa). The N-linked (GlcNAc...) asparagine glycan is linked to Asn74. Cystine bridges form between Cys119–Cys168, Cys129–Cys152, and Cys135–Cys162. ADP-ribosylarginine; by ART2B occurs at positions 125 and 133. An N-linked (GlcNAc...) asparagine glycan is attached at Asn187. Thr189 serves as a coordination point for ATP. 2 N-linked (GlcNAc...) asparagine glycosylation sites follow: Asn202 and Asn213. Cys216 and Cys226 are disulfide-bonded. N-linked (GlcNAc...) asparagine glycosylation occurs at Asn241. The cysteines at positions 260 and 269 are disulfide-linked. ATP is bound by residues Arg294 and Lys311. The helical transmembrane segment at 329 to 353 threads the bilayer; sequence DIIQLVVYIGSTLSYFGLATVCIDL. A Na(+)-binding site is contributed by Ser342. Residues 354 to 595 lie on the Cytoplasmic side of the membrane; sequence LINTYSSAFC…GQYSGFKYPY (242 aa). The interval 360–377 is C-cys anchor; sequence SAFCRSGVYPYCKCCEPC. Residues Cys363, Cys374, and Cys377 are each lipidated (S-palmitoyl cysteine). A Phosphoserine modification is found at Ser390. A cytoplasmic ballast region spans residues 395-595; that stretch reads KPTLKYVSFV…GQYSGFKYPY (201 aa). Residues Cys479, Cys499, and Cys506 each contribute to the Zn(2+) site. 4 residues coordinate GTP: Arg546, His547, Tyr550, and Ala567. Cys572 is a Zn(2+) binding site. GTP is bound by residues Lys583, Ser589, and Gly590.

This sequence belongs to the P2X receptor family. In terms of assembly, homotrimers. Interacts with LAMA3, ITGB2, ACTB, ACTN4, SVIL, MPP3, HSPA1, HSPCB, HSPA8, PIK230 and PTPRB. Interacts (via C-terminus) with EMP2. Post-translationally, phosphorylation results in its inactivation. In terms of processing, ADP-ribosylation at Arg-125 is necessary and sufficient to activate P2RX7 and gate the channel. Palmitoylation of several cysteines in the C-terminal cytoplasmic tail is required for efficient localization to cell surface. Palmitoylation prevents channel desensitization by physically anchoring the palmitoylated groups to the membrane.

Its subcellular location is the cell membrane. The enzyme catalyses Ca(2+)(in) = Ca(2+)(out). It carries out the reaction K(+)(in) = K(+)(out). The catalysed reaction is Na(+)(in) = Na(+)(out). With respect to regulation, activated by high extracellular ATP levels (0.1-2.5 mM). The synthetic analog 2'(3')-O-(4-benzoylbenzoyl)ATP (BzATP) acts as a potent agonist. Does not undergo desensitization, instead, undergoes a facilitation process where currents progressively increase with repetitive or prolonged agonist application. Palmitoylation prevents channel desensitization. The permeability of the P2RX7 channel is modulated by the amount of cholesterol in the plasma membrane. Its function is as follows. ATP-gated nonselective transmembrane cation channel. Requires high millimolar-range concentrations of ATP to become activated. ATP binding trigers the rapid opening of the channel and allows Na(+) and Ca(2+) influx and K(+) efflux. Has also the ability to form a large pore in the cell membrane, allowing the passage of large cationic molecules. In microglia, may mediate NADPH transport across the plasma membrane. In immune cells, P2RX7 acts as a molecular sensor in pathological inflammatory states by detecting and responding to high local concentrations of extracellar ATP. In microglial cells, P2RX7 activation leads to the release of pro-inflammatory cytokines, such as IL-1beta and IL-18, through the activation of the NLRP3 inflammasome and caspase-1. Cooperates with KCNK6 to activate NLRP3 inflammasome. Activates death pathways leading to apoptosis and autophagy. Activates death pathways leading to pyroptosis. The protein is P2X purinoceptor 7 (P2rx7) of Mus musculus (Mouse).